A 430-amino-acid chain; its full sequence is MNVKMEKIEENVVKLEITVEADKFNESMKKAFAKNAKKFNIPGFRKGKAPMNIIKKYYGEGVFYEDAMSFCCESTYPDALKENNVNPVDYPKIEVVQIGEGKEFIYTAEVTVFPEVKLGEYKGVEVKKNTYDVKEEDIEQELKNMQQKDARIETKENGSIENGNIAIIDFKGFVDGKEFEGGEGQDYQLEIGSGTFIDNFEEQLIGLNAGDSKEVNVKFPEEYGIDDLNGKEAVFKVTVKEIKVKEIPELDDEFAKEVSEFDTLDEVKEDIRNKKQEANKLREEREFEEAVLEAVCSNTEINIPEVMVEKEVDNMIRDLETRLKYQGLDLETYYKYTNNDEQKVREYMRETSEKKVKADLVITEIAKVEKVEASDEEIKEKATEIAKQYGSDDVEKMAKIILDGQKEYLKMQIVNEKVMKMLVDSSKIIA.

A PPIase FKBP-type domain is found at 163–248; that stretch reads GNIAIIDFKG…VKEIKVKEIP (86 aa).

It belongs to the FKBP-type PPIase family. Tig subfamily.

It localises to the cytoplasm. It catalyses the reaction [protein]-peptidylproline (omega=180) = [protein]-peptidylproline (omega=0). In terms of biological role, involved in protein export. Acts as a chaperone by maintaining the newly synthesized protein in an open conformation. Functions as a peptidyl-prolyl cis-trans isomerase. This chain is Trigger factor, found in Clostridium kluyveri (strain NBRC 12016).